The following is a 343-amino-acid chain: Probable xyloglucan endotransglucosylase/hydrolase protein 30 (343 aa).

Residues 1-23 (MSKSSYNHIFILILCLCLRSSSA) form the signal peptide. The GH16 domain maps to 24–224 (FTNLNTLSFE…YKFAPFVAEF (201 aa)). Glu109 serves as the catalytic Nucleophile. Glu113 serves as the catalytic Proton donor. Xyloglucan is bound by residues Glu113 and 126 to 128 (QTN). Asn132 carries N-linked (GlcNAc...) asparagine glycosylation. Residues 136–140 (HRGRE), 203–204 (DW), Gly208, and Arg285 each bind xyloglucan. Residues Cys280 and Cys293 are joined by a disulfide bond. Residues 306 to 343 (TGRLKFGGTEARERRRNRRQQRRPEIEIESDPDDRKLL) are disordered.

This sequence belongs to the glycosyl hydrolase 16 family. XTH group 3 subfamily. In terms of processing, contains at least one intrachain disulfide bond essential for its enzymatic activity. As to expression, predominantly expressed in green siliques.

Its subcellular location is the secreted. It is found in the cell wall. It localises to the extracellular space. The protein resides in the apoplast. It catalyses the reaction breaks a beta-(1-&gt;4) bond in the backbone of a xyloglucan and transfers the xyloglucanyl segment on to O-4 of the non-reducing terminal glucose residue of an acceptor, which can be a xyloglucan or an oligosaccharide of xyloglucan.. Its function is as follows. Catalyzes xyloglucan endohydrolysis (XEH) and/or endotransglycosylation (XET). Cleaves and religates xyloglucan polymers, an essential constituent of the primary cell wall, and thereby participates in cell wall construction of growing tissues. This Arabidopsis thaliana (Mouse-ear cress) protein is Probable xyloglucan endotransglucosylase/hydrolase protein 30 (XTH30).